We begin with the raw amino-acid sequence, 185 residues long: Ribosome-recycling factor (185 aa).

This sequence belongs to the RRF family.

It is found in the cytoplasm. Responsible for the release of ribosomes from messenger RNA at the termination of protein biosynthesis. May increase the efficiency of translation by recycling ribosomes from one round of translation to another. This Aeromonas salmonicida (strain A449) protein is Ribosome-recycling factor.